Reading from the N-terminus, the 468-residue chain is MISMLSENEAKILFFLKDLKKTNSVELAIKMGIPESSVLSLIELLREKGYVKTEVKSEKHYVLTEEGRKRKESGLPEDILINTLNGQEKDLNEIKNILNKDFNIAISWAKRKGLIDIKEGKVIPKVKTYMSSEYLALSNLERADSNTINLLKKRGLIEEKERKIVSVELIKEPKESEIGISNLNRELIISGEWKKYKLKKYNVEAFPPYYTISKKHYFREFLEKVKDIMISLGFKEINTGYIEMEFYNFDLLFQPQDHPAREIHDSFSVEGSGKIEDKDLLNNVKEIHEKFWKYEWKQDITLRLMLRSQTTATTARVLASRPKAPQKVFTLGKVFRPDAIDATHLIEFHQLDGVIIDNNFTFKELLGVLKEIFYRLGIKEVKFKPAYFPFTEPSVEAYGYLEKLGWVEMCGAGLLRPEILSSVGIDSTAGAWGIGIERLAMSFLNISDIRLLYSNNIEYIRDTKVKIE.

L-phenylalanine is bound by residues threonine 311, 350–352 (QLD), and phenylalanine 390. Position 392 (glutamate 392) interacts with Mg(2+).

This sequence belongs to the class-II aminoacyl-tRNA synthetase family. Phe-tRNA synthetase alpha subunit type 2 subfamily. As to quaternary structure, tetramer of two alpha and two beta subunits. The cofactor is Mg(2+).

It localises to the cytoplasm. The catalysed reaction is tRNA(Phe) + L-phenylalanine + ATP = L-phenylalanyl-tRNA(Phe) + AMP + diphosphate + H(+). The protein is Phenylalanine--tRNA ligase alpha subunit of Saccharolobus solfataricus (strain ATCC 35092 / DSM 1617 / JCM 11322 / P2) (Sulfolobus solfataricus).